We begin with the raw amino-acid sequence, 219 residues long: Large ribosomal subunit protein uL3 (219 aa).

The span at 133 to 145 shows a compositional bias: polar residues; the sequence is GRASHGNSRSHNV. The disordered stretch occupies residues 133-153; sequence GRASHGNSRSHNVPGSIGMAQ. Gln-153 is subject to N5-methylglutamine.

Belongs to the universal ribosomal protein uL3 family. In terms of assembly, part of the 50S ribosomal subunit. Forms a cluster with proteins L14 and L19. Post-translationally, methylated by PrmB.

In terms of biological role, one of the primary rRNA binding proteins, it binds directly near the 3'-end of the 23S rRNA, where it nucleates assembly of the 50S subunit. This Paraburkholderia phymatum (strain DSM 17167 / CIP 108236 / LMG 21445 / STM815) (Burkholderia phymatum) protein is Large ribosomal subunit protein uL3.